The primary structure comprises 420 residues: Methyltransferase/ribosomally synthesized cyclic peptide gymnopeptides precursor gymMA1 (420 aa).

Positions 1–251 are methyltransferase domain; that stretch reads MQSSTQKQAG…GISTFYIPPK (251 aa). Residues Arg72, Tyr76, and Tyr98 contribute to the active site. 8 residues coordinate S-adenosyl-L-methionine: Tyr98, His100, Val103, Ala130, Gln172, Ala213, Ser244, and Thr245. The clasp domain stretch occupies residues 252-378; sequence ELKDPSMDIM…WALRCAMKKM (127 aa). Residues 379–392 form a precursor leader region; the sequence is PSSFMDEVDANNLP. An N-methylvaline mark is found at Val394 and Val396. N-methylglycine is present on Gly398. Val399 carries the post-translational modification N-methylvaline. Ala400 is subject to N-methylalanine. Gly402 carries the post-translational modification N-methylglycine. Residues Val404, Val406, Val408, and Val410 each carry the N-methylvaline modification.

It in the N-terminal section; belongs to the precorrin methyltransferase family. In terms of assembly, homodimer. GymMA1 automethylates at Val-394, Val-396, Gly-398, Val-399, Ala-400, Gly-402, Val-404, Val-406, Val-408 and Val-410 before being processed by a prolyloligopeptidase which likely forms a peptidyl ester upon removal of the follower propeptide, which then undergoes macrocyclization with the N-terminus of the modified core peptide. Peptide backbone alpha-N-methylations change the physicochemical properties of amide bonds to provide structural constraints and other favorable characteristics including biological membrane permeability to peptides.

The protein operates within mycotoxin biosynthesis. In terms of biological role, fusion protein of the methyltransferase gymM1 and the gymnopeptides precursor; part of the gene cluster that mediates the biosynthesis of gymnopeptides, highly methylated cyclic octadecapeptides with striking antiproliferative activity on several human cancer cell lines. Gymnopeptides derive from the C-terminus of the gymMA1 protein, and it is the gymMA1 protein that methylates its own C-terminus using S-adenosyl methionine (SAM). The C-terminus is subsequently cleaved off and macrocyclized by a prolyloligopeptidase to give the final product. This Gymnopus fusipes (Spindle toughshank) protein is Methyltransferase/ribosomally synthesized cyclic peptide gymnopeptides precursor gymMA1.